Reading from the N-terminus, the 536-residue chain is Putative UDP-glucuronosyltransferase ugt-47 (536 aa).

A signal peptide spans 1-21; the sequence is MMLQTSTILQLLLFLVGSVSA. N-linked (GlcNAc...) asparagine glycosylation is found at Asn-52 and Asn-308. The helical transmembrane segment at 497-517 threads the bilayer; the sequence is IIVPVLFVLLYCLIIPFFKLI.

The protein belongs to the UDP-glycosyltransferase family.

The protein resides in the membrane. It catalyses the reaction glucuronate acceptor + UDP-alpha-D-glucuronate = acceptor beta-D-glucuronoside + UDP + H(+). The polypeptide is Putative UDP-glucuronosyltransferase ugt-47 (ugt-47) (Caenorhabditis briggsae).